Reading from the N-terminus, the 240-residue chain is L-isoleucine-4-hydroxylase (240 aa).

3 residues coordinate Fe cation: H159, D161, and H212.

Belongs to the iron/ascorbate-dependent oxidoreductase family. L-ascorbate is required as a cofactor. The cofactor is Fe(2+).

It carries out the reaction L-isoleucine + 2-oxoglutarate + O2 = (4S)-4-hydroxy-L-isoleucine + succinate + CO2. Functionally, catalyzes the hydroxylation of L-isoleucine to produce (4S)-4-hydroxy-L-isoleucine. Can also catalyze the hydroxylation of L-leucine, L-norvaline, L-norleucine and L-allo-isoleucine, as well as the sulfoxidation of L-methionine, L-ethionine, S-methyl-L-cysteine, S-ethyl-L-cysteine, and S-allyl-L-cysteine. The protein is L-isoleucine-4-hydroxylase of Bacillus thuringiensis.